Reading from the N-terminus, the 189-residue chain is Parkinson disease protein 7 homolog (189 aa).

An N-acetylalanine; in Protein/nucleic acid deglycase DJ-1, N-terminally processed modification is found at Ala-2. 2 S-palmitoyl cysteine lipidation sites follow: Cys-46 and Cys-53. Tyr-67 is modified (phosphotyrosine). The Nucleophile role is filled by Cys-106. Cys-106 is modified (cysteine sulfinic acid (-SO2H); alternate). The S-palmitoyl cysteine; alternate moiety is linked to residue Cys-106. Residue His-126 is part of the active site. Residue Lys-130 forms a Glycyl lysine isopeptide (Lys-Gly) (interchain with G-Cter in SUMO) linkage. The residue at position 148 (Lys-148) is an N6-acetyllysine. N6-succinyllysine is present on Lys-182.

It belongs to the peptidase C56 family. As to quaternary structure, homodimer. Binds EFCAB6/DJBP and PIAS2. Part of a ternary complex containing PARK7, EFCAB6/DJBP and AR. Interacts (via N-terminus) with OTUD7B. Interacts with BBS1, HIPK1, CLCF1 and MTERF. Forms a complex with PINK1 and PRKN. Interacts (via C-terminus) with NCF1; the interaction is enhanced by LPS and modulates NCF1 phosphorylation and membrane translocation. Interacts with NENF. Requires Deglycase activity does not require glutathione as a cofactor, however, glycated glutathione constitutes a PARK7 substrate. as cofactor. Sumoylated on Lys-130 by PIAS2 or PIAS4; which is essential for cell-growth promoting activity and transforming activity. Post-translationally, undergoes cleavage of a C-terminal peptide and subsequent activation of protease activity in response to oxidative stress. Detected in liver, heart, spleen and testis (at protein level). Detected in liver, heart, spleen, kidney, epididymidis, vas deferens, sperm cells and testis.

It is found in the cell membrane. The protein localises to the cytoplasm. It localises to the nucleus. Its subcellular location is the membrane raft. The protein resides in the mitochondrion. It is found in the endoplasmic reticulum. It carries out the reaction N(omega)-(1-hydroxy-2-oxopropyl)-L-arginyl-[protein] + H2O = lactate + L-arginyl-[protein] + H(+). It catalyses the reaction N(6)-(1-hydroxy-2-oxopropyl)-L-lysyl-[protein] + H2O = lactate + L-lysyl-[protein] + H(+). The catalysed reaction is S-(1-hydroxy-2-oxopropyl)-L-cysteinyl-[protein] + H2O = lactate + L-cysteinyl-[protein] + H(+). The enzyme catalyses N(omega)-(1-hydroxy-2-oxoethyl)-L-arginyl-[protein] + H2O = L-arginyl-[protein] + glycolate + H(+). It carries out the reaction N(6)-(1-hydroxy-2-oxoethyl)-L-lysyl-[protein] + H2O = glycolate + L-lysyl-[protein] + H(+). It catalyses the reaction S-(1-hydroxy-2-oxoethyl)-L-cysteinyl-[protein] + H2O = glycolate + L-cysteinyl-[protein] + H(+). The catalysed reaction is N(2)-(1-hydroxy-2-oxopropyl)-dGTP + H2O = lactate + dGTP + H(+). The enzyme catalyses N(2)-(1-hydroxy-2-oxopropyl)-GTP + H2O = lactate + GTP + H(+). It carries out the reaction N(2)-(1-hydroxy-2-oxopropyl)-GDP + H2O = lactate + GDP + H(+). It catalyses the reaction N(2)-(1-hydroxy-2-oxopropyl)-GMP + H2O = lactate + GMP + H(+). The catalysed reaction is N(2)-(1-hydroxy-2-oxoethyl)-dGTP + H2O = dGTP + glycolate + H(+). The enzyme catalyses N(2)-(1-hydroxy-2-oxoethyl)-GTP + H2O = glycolate + GTP + H(+). It carries out the reaction N(2)-(1-hydroxy-2-oxoethyl)-GDP + H2O = glycolate + GDP + H(+). It catalyses the reaction N(2)-(1-hydroxy-2-oxoethyl)-GMP + H2O = glycolate + GMP + H(+). The catalysed reaction is an N(2)-(1-hydroxy-2-oxopropyl)-guanosine in RNA + H2O = a guanosine in RNA + lactate + H(+). The enzyme catalyses an N(2)-(1-hydroxy-2-oxopropyl)-2'-deoxyguanosine in DNA + H2O = a 2'-deoxyguanosine in DNA + lactate + H(+). It carries out the reaction an N(2)-(1-hydroxy-2-oxoethyl)-guanosine in RNA + H2O = a guanosine in RNA + glycolate + H(+). It catalyses the reaction an N(2)-(1-hydroxy-2-oxoethyl)-2'-deoxyguanosine in DNA + H2O = a 2'-deoxyguanosine in DNA + glycolate + H(+). Functionally, multifunctional protein with controversial molecular function which plays an important role in cell protection against oxidative stress and cell death acting as oxidative stress sensor and redox-sensitive chaperone and protease. It is involved in neuroprotective mechanisms like the stabilization of NFE2L2 and PINK1 proteins, male fertility as a positive regulator of androgen signaling pathway as well as cell growth and transformation through, for instance, the modulation of NF-kappa-B signaling pathway. Has been described as a protein and nucleotide deglycase that catalyzes the deglycation of the Maillard adducts formed between amino groups of proteins or nucleotides and reactive carbonyl groups of glyoxals. But this function is rebuted by other works. As a protein deglycase, repairs methylglyoxal- and glyoxal-glycated proteins, and releases repaired proteins and lactate or glycolate, respectively. Deglycates cysteine, arginine and lysine residues in proteins, and thus reactivates these proteins by reversing glycation by glyoxals. Acts on early glycation intermediates (hemithioacetals and aminocarbinols), preventing the formation of advanced glycation endproducts (AGE) that cause irreversible damage. Also functions as a nucleotide deglycase able to repair glycated guanine in the free nucleotide pool (GTP, GDP, GMP, dGTP) and in DNA and RNA. Is thus involved in a major nucleotide repair system named guanine glycation repair (GG repair), dedicated to reversing methylglyoxal and glyoxal damage via nucleotide sanitization and direct nucleic acid repair. Protects histones from adduction by methylglyoxal, controls the levels of methylglyoxal-derived argininine modifications on chromatin. Able to remove the glycations and restore histone 3, histone glycation disrupts both local and global chromatin architecture by altering histone-DNA interactions as well as histone acetylation and ubiquitination levels. Displays a very low glyoxalase activity that may reflect its deglycase activity. Eliminates hydrogen peroxide and protects cells against hydrogen peroxide-induced cell death. Required for correct mitochondrial morphology and function as well as for autophagy of dysfunctional mitochondria. Plays a role in regulating expression or stability of the mitochondrial uncoupling proteins SLC25A14 and SLC25A27 in dopaminergic neurons of the substantia nigra pars compacta and attenuates the oxidative stress induced by calcium entry into the neurons via L-type channels during pacemaking. Regulates astrocyte inflammatory responses, may modulate lipid rafts-dependent endocytosis in astrocytes and neuronal cells. In pancreatic islets, involved in the maintenance of mitochondrial reactive oxygen species (ROS) levels and glucose homeostasis in an age- and diet dependent manner. Protects pancreatic beta cells from cell death induced by inflammatory and cytotoxic setting. Binds to a number of mRNAs containing multiple copies of GG or CC motifs and partially inhibits their translation but dissociates following oxidative stress. Metal-binding protein able to bind copper as well as toxic mercury ions, enhances the cell protection mechanism against induced metal toxicity. In macrophages, interacts with the NADPH oxidase subunit NCF1 to direct NADPH oxidase-dependent ROS production, and protects against sepsis. The protein is Parkinson disease protein 7 homolog (PARK7) of Mesocricetus auratus (Golden hamster).